The primary structure comprises 200 residues: GTP cyclohydrolase-2 (200 aa).

GTP is bound at residue 50 to 54; sequence RVHSE. Zn(2+) contacts are provided by C55, C66, and C68. Residues Q71, 93–95, and T115 contribute to the GTP site; that span reads EGR. The active-site Proton acceptor is D127. Catalysis depends on R129, which acts as the Nucleophile. Positions 150 and 155 each coordinate GTP.

It belongs to the GTP cyclohydrolase II family. Zn(2+) serves as cofactor.

The catalysed reaction is GTP + 4 H2O = 2,5-diamino-6-hydroxy-4-(5-phosphoribosylamino)-pyrimidine + formate + 2 phosphate + 3 H(+). The protein operates within cofactor biosynthesis; riboflavin biosynthesis; 5-amino-6-(D-ribitylamino)uracil from GTP: step 1/4. Catalyzes the conversion of GTP to 2,5-diamino-6-ribosylamino-4(3H)-pyrimidinone 5'-phosphate (DARP), formate and pyrophosphate. This is GTP cyclohydrolase-2 from Acinetobacter baumannii (strain SDF).